The primary structure comprises 178 residues: Large ribosomal subunit protein uL6 (178 aa).

Belongs to the universal ribosomal protein uL6 family. Part of the 50S ribosomal subunit.

This protein binds to the 23S rRNA, and is important in its secondary structure. It is located near the subunit interface in the base of the L7/L12 stalk, and near the tRNA binding site of the peptidyltransferase center. The polypeptide is Large ribosomal subunit protein uL6 (Streptococcus mutans serotype c (strain ATCC 700610 / UA159)).